The chain runs to 367 residues: Putative F-box/kelch-repeat protein At4g39600 (367 aa).

An F-box domain is found at 11 to 57; that stretch reads ATSNPSLPEDLVVSCLARVSRLYYPTLSLVSKSFRSLIASPDLYKTR. Kelch repeat units follow at residues 127 to 171 and 172 to 216; these read HLYA…LDGK and MYLA…EGKI.

This chain is Putative F-box/kelch-repeat protein At4g39600, found in Arabidopsis thaliana (Mouse-ear cress).